The chain runs to 255 residues: Hydroxyacylglutathione hydrolase (255 aa).

Residues histidine 55, histidine 57, aspartate 59, histidine 60, histidine 113, aspartate 132, and histidine 170 each contribute to the Zn(2+) site.

The protein belongs to the metallo-beta-lactamase superfamily. Glyoxalase II family. In terms of assembly, monomer. The cofactor is Zn(2+).

It carries out the reaction an S-(2-hydroxyacyl)glutathione + H2O = a 2-hydroxy carboxylate + glutathione + H(+). It participates in secondary metabolite metabolism; methylglyoxal degradation; (R)-lactate from methylglyoxal: step 2/2. Its function is as follows. Thiolesterase that catalyzes the hydrolysis of S-D-lactoyl-glutathione to form glutathione and D-lactic acid. This is Hydroxyacylglutathione hydrolase from Methylobacterium nodulans (strain LMG 21967 / CNCM I-2342 / ORS 2060).